Here is a 325-residue protein sequence, read N- to C-terminus: Putative 1-aminocyclopropane-1-carboxylate deaminase (325 aa).

The residue at position 54 (Lys54) is an N6-(pyridoxal phosphate)lysine.

The protein belongs to the ACC deaminase/D-cysteine desulfhydrase family. It depends on pyridoxal 5'-phosphate as a cofactor.

The catalysed reaction is 1-aminocyclopropane-1-carboxylate + H2O = 2-oxobutanoate + NH4(+). This chain is Putative 1-aminocyclopropane-1-carboxylate deaminase, found in Pyrococcus horikoshii (strain ATCC 700860 / DSM 12428 / JCM 9974 / NBRC 100139 / OT-3).